The primary structure comprises 164 residues: Zinc finger protein ZAT8 (164 aa).

2 consecutive C2H2-type zinc fingers follow at residues 37–59 (FRCKTCLKEFSSFQALGGHRASH) and 85–107 (HPCPICGVEFPMGQALGGHMRRH).

Its subcellular location is the nucleus. Functionally, probable transcription factor that may be involved in stress responses. The sequence is that of Zinc finger protein ZAT8 (ZAT8) from Arabidopsis thaliana (Mouse-ear cress).